The primary structure comprises 1210 residues: DNA-directed RNA polymerase II subunit RPB2 (1210 aa).

D826 serves as a coordination point for Mg(2+). Positions 1152, 1155, 1170, and 1173 each coordinate Zn(2+). The segment at 1152–1173 adopts a C4-type zinc-finger fold; the sequence is CDICGLIAIASYKKDSYECRSC.

Belongs to the RNA polymerase beta chain family. Component of the RNA polymerase II (Pol II) complex consisting of 12 subunits.

It localises to the nucleus. The catalysed reaction is RNA(n) + a ribonucleoside 5'-triphosphate = RNA(n+1) + diphosphate. Its function is as follows. DNA-dependent RNA polymerase catalyzes the transcription of DNA into RNA using the four ribonucleoside triphosphates as substrates. Second largest component of RNA polymerase II which synthesizes mRNA precursors and many functional non-coding RNAs. Proposed to contribute to the polymerase catalytic activity and forms the polymerase active center together with the largest subunit. Pol II is the central component of the basal RNA polymerase II transcription machinery. It is composed of mobile elements that move relative to each other. RPB2 is part of the core element with the central large cleft, the clamp element that moves to open and close the cleft and the jaws that are thought to grab the incoming DNA template. The sequence is that of DNA-directed RNA polymerase II subunit RPB2 (rpb2) from Schizosaccharomyces pombe (strain 972 / ATCC 24843) (Fission yeast).